Consider the following 269-residue polypeptide: 4-hydroxy-tetrahydrodipicolinate reductase (269 aa).

NAD(+)-binding positions include 11 to 16 and Glu37; that span reads GASGRM. NADP(+) is bound at residue Arg38. Residues 101–103 and 125–128 each bind NAD(+); these read GTT and AGNM. Catalysis depends on His158, which acts as the Proton donor/acceptor. A (S)-2,3,4,5-tetrahydrodipicolinate-binding site is contributed by His159. The Proton donor role is filled by Lys162. (S)-2,3,4,5-tetrahydrodipicolinate is bound at residue 168–169; the sequence is GT.

It belongs to the DapB family.

It is found in the cytoplasm. The catalysed reaction is (S)-2,3,4,5-tetrahydrodipicolinate + NAD(+) + H2O = (2S,4S)-4-hydroxy-2,3,4,5-tetrahydrodipicolinate + NADH + H(+). It catalyses the reaction (S)-2,3,4,5-tetrahydrodipicolinate + NADP(+) + H2O = (2S,4S)-4-hydroxy-2,3,4,5-tetrahydrodipicolinate + NADPH + H(+). Its pathway is amino-acid biosynthesis; L-lysine biosynthesis via DAP pathway; (S)-tetrahydrodipicolinate from L-aspartate: step 4/4. Catalyzes the conversion of 4-hydroxy-tetrahydrodipicolinate (HTPA) to tetrahydrodipicolinate. In Cereibacter sphaeroides (strain KD131 / KCTC 12085) (Rhodobacter sphaeroides), this protein is 4-hydroxy-tetrahydrodipicolinate reductase.